The primary structure comprises 105 residues: Nucleoid-associated protein SSP2277 (105 aa).

A disordered region spans residues 1–41 (MRGGGNMQQMMKQMQKMQKKMGEEQEKLKEEKVQGTAGGGM). Positions 7 to 16 (MQQMMKQMQK) are enriched in low complexity. Basic and acidic residues predominate over residues 20–33 (KMGEEQEKLKEEKV).

The protein belongs to the YbaB/EbfC family. In terms of assembly, homodimer.

It is found in the cytoplasm. It localises to the nucleoid. Functionally, binds to DNA and alters its conformation. May be involved in regulation of gene expression, nucleoid organization and DNA protection. This Staphylococcus saprophyticus subsp. saprophyticus (strain ATCC 15305 / DSM 20229 / NCIMB 8711 / NCTC 7292 / S-41) protein is Nucleoid-associated protein SSP2277.